The sequence spans 544 residues: Chaperonin GroEL (544 aa).

ATP contacts are provided by residues 30–33 (TLGP), Lys-51, 87–91 (DGTTT), Gly-415, 479–481 (NAA), and Asp-495.

This sequence belongs to the chaperonin (HSP60) family. In terms of assembly, forms a cylinder of 14 subunits composed of two heptameric rings stacked back-to-back. Interacts with the co-chaperonin GroES.

It localises to the cytoplasm. It catalyses the reaction ATP + H2O + a folded polypeptide = ADP + phosphate + an unfolded polypeptide.. Its function is as follows. Together with its co-chaperonin GroES, plays an essential role in assisting protein folding. The GroEL-GroES system forms a nano-cage that allows encapsulation of the non-native substrate proteins and provides a physical environment optimized to promote and accelerate protein folding. In Francisella tularensis subsp. holarctica (strain FTNF002-00 / FTA), this protein is Chaperonin GroEL.